Reading from the N-terminus, the 465-residue chain is MIKREFLPESAELKIKLTADSKKWAEFYQKAEQKQAAKVSLRGFRKGKVPLEKARAYLNPQAVFELALRMFLPELEKQAATNIIDSDNVIESPIFNIVNMDKNNLEIEFLYPVYPEIKLPDYKNLKTKFAIKKITKEDIELQKQKLLEAKGRFIEVNRPVKIGDVINFNFKGFIDDEPFDGGEGENFDLRIGSNSFIAGFEEQLVGLEIKKEADIYVTFPENYQVHTYANKKARFRVRINKIKENQPAKLTNEFVASLKIQNVETISQLEVYLENLTERENIERAKIDFQRNALTEIGEQVEVPLAKKLINLEIERLNEVFHSTLKQQEIPLKEYLKITKFTEKDIYDQFEVEAKKLLKNSFIFAEIAKLEGLVPTQQEYESHVEKLAKFTGKSVQEISETVSYNEIQINITNQKVIDKLIEFNHEAKDEEIVNKNQNDNEIEQDKEQKDNNEEKIKQENNLENK.

Residues 163 to 248 enclose the PPIase FKBP-type domain; it reads GDVINFNFKG…INKIKENQPA (86 aa). Residues 431 to 465 form a disordered region; the sequence is EIVNKNQNDNEIEQDKEQKDNNEEKIKQENNLENK. Residues 443–465 show a composition bias toward basic and acidic residues; that stretch reads EQDKEQKDNNEEKIKQENNLENK.

Belongs to the FKBP-type PPIase family. Tig subfamily.

The protein resides in the cytoplasm. The enzyme catalyses [protein]-peptidylproline (omega=180) = [protein]-peptidylproline (omega=0). Involved in protein export. Acts as a chaperone by maintaining the newly synthesized protein in an open conformation. Functions as a peptidyl-prolyl cis-trans isomerase. The polypeptide is Trigger factor (Mesomycoplasma hyopneumoniae (strain J / ATCC 25934 / NCTC 10110) (Mycoplasma hyopneumoniae)).